A 106-amino-acid chain; its full sequence is Toxin-like structure LSTX-D9 (106 aa).

An N-terminal signal peptide occupies residues 1 to 20 (MMKVLVVVALLLTLIIYSSS). The propeptide occupies 21–41 (DGIDDLEADELVSLMAHEQTR). Disulfide bonds link C45–C60, C52–C69, C59–C85, and C71–C83.

The protein belongs to the neurotoxin 19 (CSTX) family. 02 (D7) subfamily. As to expression, expressed by the venom gland.

It is found in the secreted. In Lycosa singoriensis (Wolf spider), this protein is Toxin-like structure LSTX-D9.